The following is a 642-amino-acid chain: Threonine--tRNA ligase (642 aa).

In terms of domain architecture, TGS spans 1–61 (MPVITLPDGS…ETDAELSIIT (61 aa)). The interval 243–534 (DHRKIGKQLD…LIEEYAGRFP (292 aa)) is catalytic. 3 residues coordinate Zn(2+): cysteine 334, histidine 385, and histidine 511.

It belongs to the class-II aminoacyl-tRNA synthetase family. As to quaternary structure, homodimer. It depends on Zn(2+) as a cofactor.

Its subcellular location is the cytoplasm. It catalyses the reaction tRNA(Thr) + L-threonine + ATP = L-threonyl-tRNA(Thr) + AMP + diphosphate + H(+). Functionally, catalyzes the attachment of threonine to tRNA(Thr) in a two-step reaction: L-threonine is first activated by ATP to form Thr-AMP and then transferred to the acceptor end of tRNA(Thr). Also edits incorrectly charged L-seryl-tRNA(Thr). This is Threonine--tRNA ligase from Shewanella putrefaciens (strain CN-32 / ATCC BAA-453).